A 314-amino-acid polypeptide reads, in one-letter code: Dihydroorotate dehydrogenase (fumarate) (314 aa).

Substrate-binding positions include K46, 70–74 (NSMGL), and N130. 46 to 47 (KS) contacts FMN. N130 provides a ligand contact to FMN. Catalysis depends on nucleophile residues S132 and C133. The FMN site is built by K167 and I195. 196 to 197 (NS) serves as a coordination point for substrate. Residues G224, 252-253 (GG), and 274-275 (GT) contribute to the FMN site.

Belongs to the dihydroorotate dehydrogenase family. Type 1 subfamily. As to quaternary structure, homodimer. The cofactor is FMN.

The protein resides in the cytoplasm. It carries out the reaction (S)-dihydroorotate + fumarate = orotate + succinate. Its pathway is pyrimidine metabolism; UMP biosynthesis via de novo pathway. In terms of biological role, catalyzes the conversion of dihydroorotate to orotate with fumarate as the electron acceptor. The sequence is that of Dihydroorotate dehydrogenase (fumarate) (URA1) from Saccharomyces mikatae (Yeast).